We begin with the raw amino-acid sequence, 627 residues long: tRNA uridine 5-carboxymethylaminomethyl modification enzyme MnmG (627 aa).

FAD is bound by residues 13–18 (GGGHAG), Val-125, and Ser-180. 274–288 (GPRYCPSIEDKVVRF) is an NAD(+) binding site. Gln-371 is an FAD binding site.

This sequence belongs to the MnmG family. In terms of assembly, homodimer. Heterotetramer of two MnmE and two MnmG subunits. The cofactor is FAD.

It localises to the cytoplasm. Functionally, NAD-binding protein involved in the addition of a carboxymethylaminomethyl (cmnm) group at the wobble position (U34) of certain tRNAs, forming tRNA-cmnm(5)s(2)U34. This chain is tRNA uridine 5-carboxymethylaminomethyl modification enzyme MnmG, found in Francisella tularensis subsp. tularensis (strain WY96-3418).